Consider the following 338-residue polypeptide: MQVYYDKDCDLSIIQGKKVAIIGYGSQGHAHANNLKDSGVDVCVGLRKGSGSWAKAENAGLAVKEVAEAVAGADVVMILTPDEFQAQLYKSEIEPNLKSGATLAFAHGFSIHYNQIVPRADLDVIMIAPKAPGHTVRSEFVKGGGIPDLIAIFQDASGSAKDLALSYASGVGGGRTGIIETTFKDETETDLFGEQAVLCGGAVELVKAGFETLVEAGYAPEMAYFECLHELKLIVDLMYEGGIANMNYSISNNAEYGEYVTGPEVINDQSRAAMRNALKRIQDGEYAKMFIAEGAHNYPSMTAYRRNNAAHPIEQVGEKLRSMMPWIASNKIVDKSKN.

The region spanning 1–181 is the KARI N-terminal Rossmann domain; the sequence is MQVYYDKDCD…GGGRTGIIET (181 aa). NADP(+) contacts are provided by residues 24 to 27, R47, S50, S52, and 82 to 85; these read YGSQ and DEFQ. H107 is an active-site residue. Residue G133 participates in NADP(+) binding. The KARI C-terminal knotted domain occupies 182 to 327; it reads TFKDETETDL…EKLRSMMPWI (146 aa). D190, E194, E226, and E230 together coordinate Mg(2+). S251 lines the substrate pocket.

The protein belongs to the ketol-acid reductoisomerase family. It depends on Mg(2+) as a cofactor.

The enzyme catalyses (2R)-2,3-dihydroxy-3-methylbutanoate + NADP(+) = (2S)-2-acetolactate + NADPH + H(+). It carries out the reaction (2R,3R)-2,3-dihydroxy-3-methylpentanoate + NADP(+) = (S)-2-ethyl-2-hydroxy-3-oxobutanoate + NADPH + H(+). It functions in the pathway amino-acid biosynthesis; L-isoleucine biosynthesis; L-isoleucine from 2-oxobutanoate: step 2/4. It participates in amino-acid biosynthesis; L-valine biosynthesis; L-valine from pyruvate: step 2/4. In terms of biological role, involved in the biosynthesis of branched-chain amino acids (BCAA). Catalyzes an alkyl-migration followed by a ketol-acid reduction of (S)-2-acetolactate (S2AL) to yield (R)-2,3-dihydroxy-isovalerate. In the isomerase reaction, S2AL is rearranged via a Mg-dependent methyl migration to produce 3-hydroxy-3-methyl-2-ketobutyrate (HMKB). In the reductase reaction, this 2-ketoacid undergoes a metal-dependent reduction by NADPH to yield (R)-2,3-dihydroxy-isovalerate. In Hahella chejuensis (strain KCTC 2396), this protein is Ketol-acid reductoisomerase (NADP(+)).